Reading from the N-terminus, the 273-residue chain is MSDVEIMAGIMRDRILNLLKEGKRIDGRSFEEYRDIEIKTGFIEKAEGSAWVRLGGTRVLVGIKVDVGEPFPDLPDRGVMTTNVELVPLASPTFEPGPPDERAIELARVIDRGIRESQAVELEKLVIVPGKLVRVVFIDVHVLDHDGNLFDATGLAAMAALMTTKIPKVEYNEETGEIIKLDEYEPLPVKHVPIPVTFAKIGSSIIVDPNLDEETVMDSRLTITTDETGHISAVQKGEGGSFKLEEVMYAIDTALKKADELRKILLEAVGSAS.

It belongs to the RNase PH family. Rrp42 subfamily. Component of the archaeal exosome complex. Forms a hexameric ring-like arrangement composed of 3 Rrp41-Rrp42 heterodimers. The hexameric ring associates with a trimer of Rrp4 and/or Csl4 subunits.

It is found in the cytoplasm. Non-catalytic component of the exosome, which is a complex involved in RNA degradation. Contributes to the structuring of the Rrp41 active site. This chain is Exosome complex component Rrp42, found in Thermococcus gammatolerans (strain DSM 15229 / JCM 11827 / EJ3).